The primary structure comprises 507 residues: Maturase K (507 aa).

The protein belongs to the intron maturase 2 family. MatK subfamily.

It localises to the plastid. It is found in the chloroplast. Usually encoded in the trnK tRNA gene intron. Probably assists in splicing its own and other chloroplast group II introns. This Magnolia champaca (Yellow jade orchid tree) protein is Maturase K.